Reading from the N-terminus, the 360-residue chain is Peptide chain release factor 1 (360 aa).

The residue at position 235 (Q235) is an N5-methylglutamine. Positions 285–313 (KRQQAEASTRRNLLGSGDRSDRNRTYNFP) are disordered.

Belongs to the prokaryotic/mitochondrial release factor family. In terms of processing, methylated by PrmC. Methylation increases the termination efficiency of RF1.

It localises to the cytoplasm. In terms of biological role, peptide chain release factor 1 directs the termination of translation in response to the peptide chain termination codons UAG and UAA. The chain is Peptide chain release factor 1 from Shigella boydii serotype 18 (strain CDC 3083-94 / BS512).